A 619-amino-acid polypeptide reads, in one-letter code: Chaperone protein HscA homolog (619 aa).

This sequence belongs to the heat shock protein 70 family.

Functionally, chaperone involved in the maturation of iron-sulfur cluster-containing proteins. Has a low intrinsic ATPase activity which is markedly stimulated by HscB. The polypeptide is Chaperone protein HscA homolog (Pseudomonas aeruginosa (strain LESB58)).